The chain runs to 355 residues: Phosphoserine aminotransferase (355 aa).

Arginine 41 lines the L-glutamate pocket. Residues 75 to 76 (AS), tryptophan 99, threonine 147, aspartate 166, and glutamine 189 contribute to the pyridoxal 5'-phosphate site. Lysine 190 carries the N6-(pyridoxal phosphate)lysine modification. 231–232 (NT) lines the pyridoxal 5'-phosphate pocket.

The protein belongs to the class-V pyridoxal-phosphate-dependent aminotransferase family. SerC subfamily. In terms of assembly, homodimer. It depends on pyridoxal 5'-phosphate as a cofactor.

It is found in the cytoplasm. The enzyme catalyses O-phospho-L-serine + 2-oxoglutarate = 3-phosphooxypyruvate + L-glutamate. It carries out the reaction 4-(phosphooxy)-L-threonine + 2-oxoglutarate = (R)-3-hydroxy-2-oxo-4-phosphooxybutanoate + L-glutamate. Its pathway is amino-acid biosynthesis; L-serine biosynthesis; L-serine from 3-phospho-D-glycerate: step 2/3. The protein operates within cofactor biosynthesis; pyridoxine 5'-phosphate biosynthesis; pyridoxine 5'-phosphate from D-erythrose 4-phosphate: step 3/5. In terms of biological role, catalyzes the reversible conversion of 3-phosphohydroxypyruvate to phosphoserine and of 3-hydroxy-2-oxo-4-phosphonooxybutanoate to phosphohydroxythreonine. In Bacteroides thetaiotaomicron (strain ATCC 29148 / DSM 2079 / JCM 5827 / CCUG 10774 / NCTC 10582 / VPI-5482 / E50), this protein is Phosphoserine aminotransferase.